A 423-amino-acid polypeptide reads, in one-letter code: Serine--tRNA ligase (423 aa).

Residue 231–233 (TGE) coordinates L-serine. 262–264 (RQE) serves as a coordination point for ATP. E285 is an L-serine binding site. 349–352 (EISS) contributes to the ATP binding site. L-serine is bound at residue S385.

This sequence belongs to the class-II aminoacyl-tRNA synthetase family. Type-1 seryl-tRNA synthetase subfamily. In terms of assembly, homodimer. The tRNA molecule binds across the dimer.

It is found in the cytoplasm. The enzyme catalyses tRNA(Ser) + L-serine + ATP = L-seryl-tRNA(Ser) + AMP + diphosphate + H(+). It catalyses the reaction tRNA(Sec) + L-serine + ATP = L-seryl-tRNA(Sec) + AMP + diphosphate + H(+). The protein operates within aminoacyl-tRNA biosynthesis; selenocysteinyl-tRNA(Sec) biosynthesis; L-seryl-tRNA(Sec) from L-serine and tRNA(Sec): step 1/1. Functionally, catalyzes the attachment of serine to tRNA(Ser). Is also able to aminoacylate tRNA(Sec) with serine, to form the misacylated tRNA L-seryl-tRNA(Sec), which will be further converted into selenocysteinyl-tRNA(Sec). The sequence is that of Serine--tRNA ligase from Phytoplasma mali (strain AT).